Here is a 415-residue protein sequence, read N- to C-terminus: Probable cytosolic iron-sulfur protein assembly protein 1 (415 aa).

A WD 1 repeat occupies alanine 9 to serine 48. Residues alanine 45 to phenylalanine 70 form a disordered region. Over residues proline 54 to serine 63 the composition is skewed to pro residues. WD repeat units lie at residues threonine 79–threonine 131, glycine 160–glutamate 200, aspartate 207–serine 246, glycine 253–glycine 300, isoleucine 335–glutamate 374, and alanine 380–valine 415.

This sequence belongs to the WD repeat CIA1 family. In terms of assembly, interacts with NAR1.

The protein resides in the cytoplasm. It localises to the nucleus. Essential component of the cytosolic iron-sulfur (Fe/S) protein assembly machinery. Required for the maturation of extramitochondrial Fe/S proteins. This chain is Probable cytosolic iron-sulfur protein assembly protein 1, found in Lodderomyces elongisporus (strain ATCC 11503 / CBS 2605 / JCM 1781 / NBRC 1676 / NRRL YB-4239) (Yeast).